The primary structure comprises 139 residues: uncharacterized protein (139 aa).

The span at 1 to 11 shows a compositional bias: polar residues; sequence MALSMSLSSDI. 2 disordered regions span residues 1-80 and 100-139; these read MALS…AAAA and ASSP…LARS. Over residues 63-80 the composition is skewed to low complexity; it reads GAGSASAGGSRLAAAAAA.

This is an uncharacterized protein from Homo sapiens (Human).